The following is a 102-amino-acid chain: Large ribosomal subunit protein bL21 (102 aa).

This sequence belongs to the bacterial ribosomal protein bL21 family. Part of the 50S ribosomal subunit. Contacts protein L20.

Functionally, this protein binds to 23S rRNA in the presence of protein L20. In Leptospira biflexa serovar Patoc (strain Patoc 1 / Ames), this protein is Large ribosomal subunit protein bL21.